Reading from the N-terminus, the 275-residue chain is Large ribosomal subunit protein uL2 (275 aa).

Basic and acidic residues predominate over residues arginine 28 to serine 38. Disordered stretches follow at residues arginine 28–histidine 58 and valine 223–lysine 275. The span at lysine 254–lysine 275 shows a compositional bias: basic residues.

Belongs to the universal ribosomal protein uL2 family. Part of the 50S ribosomal subunit. Forms a bridge to the 30S subunit in the 70S ribosome.

One of the primary rRNA binding proteins. Required for association of the 30S and 50S subunits to form the 70S ribosome, for tRNA binding and peptide bond formation. It has been suggested to have peptidyltransferase activity; this is somewhat controversial. Makes several contacts with the 16S rRNA in the 70S ribosome. The protein is Large ribosomal subunit protein uL2 of Chromohalobacter salexigens (strain ATCC BAA-138 / DSM 3043 / CIP 106854 / NCIMB 13768 / 1H11).